A 286-amino-acid polypeptide reads, in one-letter code: Tryptophan 2,3-dioxygenase (286 aa).

Residues 55-59, Y117, and R121 each bind substrate; that span reads FIIIH. Heme is bound at residue H244. T258 contacts substrate.

It belongs to the tryptophan 2,3-dioxygenase family. As to quaternary structure, homotetramer. Heme is required as a cofactor.

The catalysed reaction is L-tryptophan + O2 = N-formyl-L-kynurenine. The protein operates within amino-acid degradation; L-tryptophan degradation via kynurenine pathway; L-kynurenine from L-tryptophan: step 1/2. Its function is as follows. Heme-dependent dioxygenase that catalyzes the oxidative cleavage of the L-tryptophan (L-Trp) pyrrole ring and converts L-tryptophan to N-formyl-L-kynurenine. Catalyzes the oxidative cleavage of the indole moiety. The chain is Tryptophan 2,3-dioxygenase from Shewanella woodyi (strain ATCC 51908 / MS32).